We begin with the raw amino-acid sequence, 1247 residues long: DNA-directed RNA polymerase subunit beta (1247 aa).

The protein belongs to the RNA polymerase beta chain family. In terms of assembly, in plastids the minimal PEP RNA polymerase catalytic core is composed of four subunits: alpha, beta, beta', and beta''. When a (nuclear-encoded) sigma factor is associated with the core the holoenzyme is formed, which can initiate transcription.

The protein localises to the plastid. The enzyme catalyses RNA(n) + a ribonucleoside 5'-triphosphate = RNA(n+1) + diphosphate. Its function is as follows. DNA-dependent RNA polymerase catalyzes the transcription of DNA into RNA using the four ribonucleoside triphosphates as substrates. The chain is DNA-directed RNA polymerase subunit beta (rpoB) from Helicosporidium sp. subsp. Simulium jonesii (Green alga).